The sequence spans 108 residues: Large ribosomal subunit protein uL23 (108 aa).

It belongs to the universal ribosomal protein uL23 family. Part of the 50S ribosomal subunit. Contacts protein L29, and trigger factor when it is bound to the ribosome.

Its function is as follows. One of the early assembly proteins it binds 23S rRNA. One of the proteins that surrounds the polypeptide exit tunnel on the outside of the ribosome. Forms the main docking site for trigger factor binding to the ribosome. The chain is Large ribosomal subunit protein uL23 from Mycoplasmoides gallisepticum (strain R(low / passage 15 / clone 2)) (Mycoplasma gallisepticum).